The chain runs to 118 residues: Holo-[acyl-carrier-protein] synthase (118 aa).

Asp9 and Glu52 together coordinate Mg(2+).

It belongs to the P-Pant transferase superfamily. AcpS family. Requires Mg(2+) as cofactor.

The protein resides in the cytoplasm. It catalyses the reaction apo-[ACP] + CoA = holo-[ACP] + adenosine 3',5'-bisphosphate + H(+). Its function is as follows. Transfers the 4'-phosphopantetheine moiety from coenzyme A to a Ser of acyl-carrier-protein. In Frankia casuarinae (strain DSM 45818 / CECT 9043 / HFP020203 / CcI3), this protein is Holo-[acyl-carrier-protein] synthase.